The sequence spans 189 residues: Probable chorismate pyruvate-lyase (189 aa).

The substrate site is built by arginine 74, leucine 113, and glutamate 175.

This sequence belongs to the UbiC family.

The protein resides in the cytoplasm. The enzyme catalyses chorismate = 4-hydroxybenzoate + pyruvate. Its pathway is cofactor biosynthesis; ubiquinone biosynthesis. In terms of biological role, removes the pyruvyl group from chorismate, with concomitant aromatization of the ring, to provide 4-hydroxybenzoate (4HB) for the ubiquinone pathway. The sequence is that of Probable chorismate pyruvate-lyase from Azoarcus sp. (strain BH72).